The chain runs to 220 residues: Competence protein ComFC (220 aa).

It belongs to the ComF/GntX family. In terms of assembly, monomer and dimer in solution. Interacts with ComFA and DprA; ComFA-ComFC form rings about 150 Angstroms in diameter with apparent 6-fold symmetry.

In terms of biological role, involved in transformation (genetic competence for DNA uptake). The sequence is that of Competence protein ComFC from Streptococcus pneumoniae (strain ATCC BAA-255 / R6).